The following is a 441-amino-acid chain: Trigger factor (441 aa).

In terms of domain architecture, PPIase FKBP-type spans 161-246 (GDKVTIDFLG…VHEVLGEKLP (86 aa)).

The protein belongs to the FKBP-type PPIase family. Tig subfamily.

The protein localises to the cytoplasm. The enzyme catalyses [protein]-peptidylproline (omega=180) = [protein]-peptidylproline (omega=0). Its function is as follows. Involved in protein export. Acts as a chaperone by maintaining the newly synthesized protein in an open conformation. Functions as a peptidyl-prolyl cis-trans isomerase. This is Trigger factor from Teredinibacter turnerae (strain ATCC 39867 / T7901).